A 203-amino-acid polypeptide reads, in one-letter code: Ras-related protein Rab-18 (203 aa).

GTP-binding residues include S20, G23, K24, S25, S26, D37, P38, T43, G69, K126, D128, and A155. Positions 40–48 (QAATIGVDF) match the Effector region motif. Residues C201 and C203 are each lipidated (S-geranylgeranyl cysteine). Position 203 is a cysteine methyl ester (C203).

Belongs to the small GTPase superfamily. Rab family.

The enzyme catalyses GTP + H2O = GDP + phosphate + H(+). In terms of biological role, the small GTPases Rab are key regulators of intracellular membrane trafficking, from the formation of transport vesicles to their fusion with membranes. Rabs cycle between an inactive GDP-bound form and an active GTP-bound form that is able to recruit to membranes different sets of downstream effectors directly responsible for vesicle formation, movement, tethering and fusion. Plays a role in apical endocytosis/recycling. May be implicated in transport between the plasma membrane and early endosomes. Plays a role in the shedding of pathogen spores from intestinal cells. This chain is Ras-related protein Rab-18 (rab-18), found in Caenorhabditis elegans.